The primary structure comprises 417 residues: Mast cell carboxypeptidase A (417 aa).

Residues 1–15 form the signal peptide; sequence MRLILPVGLIATTLA. The propeptide at 16–109 is activation peptide; that stretch reads IAPVRFDREK…IEKQFDVKED (94 aa). The 295-residue stretch at 118–412 folds into the Peptidase M14 domain; sequence KYNNWEKIVA…LAVKFIAKYI (295 aa). Intrachain disulfides connect Cys173–Cys186 and Cys245–Cys268. Residues His176 and Glu179 each coordinate Zn(2+). His304 serves as a coordination point for Zn(2+). Glu378 acts as the Proton donor/acceptor in catalysis.

This sequence belongs to the peptidase M14 family. Zn(2+) is required as a cofactor.

The protein localises to the cytoplasmic vesicle. It localises to the secretory vesicle. The enzyme catalyses Release of a C-terminal amino acid, but little or no action with -Asp, -Glu, -Arg, -Lys or -Pro.. This is Mast cell carboxypeptidase A (CPA3) from Homo sapiens (Human).